Here is a 426-residue protein sequence, read N- to C-terminus: Histidine--tRNA ligase (426 aa).

This sequence belongs to the class-II aminoacyl-tRNA synthetase family. As to quaternary structure, homodimer.

Its subcellular location is the cytoplasm. The catalysed reaction is tRNA(His) + L-histidine + ATP = L-histidyl-tRNA(His) + AMP + diphosphate + H(+). This Geobacillus thermodenitrificans (strain NG80-2) protein is Histidine--tRNA ligase.